The primary structure comprises 244 residues: 3-deoxy-manno-octulosonate cytidylyltransferase (244 aa).

Belongs to the KdsB family.

Its subcellular location is the cytoplasm. It catalyses the reaction 3-deoxy-alpha-D-manno-oct-2-ulosonate + CTP = CMP-3-deoxy-beta-D-manno-octulosonate + diphosphate. The protein operates within nucleotide-sugar biosynthesis; CMP-3-deoxy-D-manno-octulosonate biosynthesis; CMP-3-deoxy-D-manno-octulosonate from 3-deoxy-D-manno-octulosonate and CTP: step 1/1. It functions in the pathway bacterial outer membrane biogenesis; lipopolysaccharide biosynthesis. In terms of biological role, activates KDO (a required 8-carbon sugar) for incorporation into bacterial lipopolysaccharide in Gram-negative bacteria. The protein is 3-deoxy-manno-octulosonate cytidylyltransferase of Rickettsia canadensis (strain McKiel).